The primary structure comprises 151 residues: Natriuretic peptides A (151 aa).

An N-terminal signal peptide occupies residues 1 to 25 (MSSFSTTTVSFLLLLAFQLLGQTRA). The tract at residues 62-105 (VLSEPNEEAGAALSPLPEVPPWTGEVSPAQRDGGALGRGPWDSS) is disordered. Residues 93 to 103 (DGGALGRGPWD) constitute a propeptide that is removed on maturation. A Phosphoserine modification is found at serine 129. Cysteine 130 and cysteine 146 are disulfide-bonded. Positions 147-151 (NSFRY) are important for degradation of atrial natriuretic peptide by IDE.

The protein belongs to the natriuretic peptide family. In terms of assembly, homodimer; disulfide-linked antiparallel dimer. In terms of processing, the precursor molecule is proteolytically cleaved by CORIN at Arg-123 to produce atrial natriuretic peptide. Undergoes further proteolytic cleavage by unknown proteases to give rise to long-acting natriuretic peptide, vessel dilator and kaliuretic peptide. Additional processing gives rise to the auriculin and atriopeptin peptides. In the kidneys, alternative processing by an unknown protease results in the peptide urodilatin. Post-translationally, cleavage by MME initiates degradation of the factor and thereby regulates its activity. Degraded by IDE (in vitro). During IDE degradation, the resulting products can temporarily stimulate NPR2 to produce cGMP, before the fragments are completely degraded and inactivated by IDE (in vitro). Degraded by IDE. In terms of processing, phosphorylation on Ser-129 decreases vasorelaxant activity. Detected in the kidney distal tubular cells (at protein level). Present in urine (at protein level). As to expression, detected in atrial and ventricular plasma samples, and in adipocytes (at protein level). Detected in urine in one study. However, was not detected in urine in another study. In the brain, predominantly expressed in the gray matter with very weak expression in the white matter (at protein level). Localizes to astrocyte-like structures throughout the white matter, and in the cerebral vessels detected in the leptomeningeal and parenchymal vessels, and endothelium and smooth muscle layers (at protein level). Relatively low levels of expression in the kidneys compared to urodilatin (at protein level).

The protein resides in the secreted. The protein localises to the perikaryon. It is found in the cell projection. In terms of biological role, hormone that plays a key role in mediating cardio-renal homeostasis, and is involved in vascular remodeling and regulating energy metabolism. Acts by specifically binding and stimulating NPR1 to produce cGMP, which in turn activates effector proteins, such as PRKG1, that drive various biological responses. Regulates vasodilation, natriuresis, diuresis and aldosterone synthesis and is therefore essential for regulating blood pressure, controlling the extracellular fluid volume and maintaining the fluid-electrolyte balance. Also involved in inhibiting cardiac remodeling and cardiac hypertrophy by inducing cardiomyocyte apoptosis and attenuating the growth of cardiomyocytes and fibroblasts. Plays a role in female pregnancy by promoting trophoblast invasion and spiral artery remodeling in uterus, and thus prevents pregnancy-induced hypertension. In adipose tissue, acts in various cGMP- and PKG-dependent pathways to regulate lipid metabolism and energy homeostasis. This includes up-regulating lipid metabolism and mitochondrial oxygen utilization by activating the AMP-activated protein kinase (AMPK), and increasing energy expenditure by acting via MAPK11 to promote the UCP1-dependent thermogenesis of brown adipose tissue. Binds the clearance receptor NPR3 which removes the hormone from circulation. May have a role in cardio-renal homeostasis through regulation of natriuresis, diuresis, vasodilation, and inhibiting aldosterone synthesis. In vitro, promotes the production of cGMP and induces vasodilation. May promote natriuresis, at least in part, by enhancing prostaglandin E2 synthesis resulting in the inhibition of renal Na+-K+-ATPase. However reports on the involvement of this peptide in mammal blood volume and blood pressure homeostasis are conflicting; according to a report, in vivo it is not sufficient to activate cGMP and does not inhibit collecting duct transport nor effect diuresis and natriuresis. Appears to bind to specific receptors that are distinct from the receptors bound by atrial natriuretic peptide and vessel dilator. Possibly enhances protein excretion in urine by decreasing proximal tubular protein reabsorption. Its function is as follows. May have a role in cardio-renal homeostasis through regulation of natriuresis, diuresis, and vasodilation. In vitro, promotes the production of cGMP and induces vasodilation. May promote natriuresis, at least in part, by enhancing prostaglandin E2 synthesis resulting in the inhibition of renal Na+-K+-ATPase. However reports on the involvement of this peptide in mammal blood volume and blood pressure homeostasis are conflicting; according to a report it is not sufficient to activate cGMP and does not inhibit collecting duct transport nor effect diuresis and natriuresis. Appears to bind to specific receptors that are distinct from the receptors bound by the atrial natriuretic and long-acting natriuretic peptides. Possibly functions in protein excretion in urine by maintaining the integrity of the proximal tubules and enhancing protein excretion by decreasing proximal tubular protein reabsorption. Functionally, may have a role in cardio-renal homeostasis through regulation of diuresis and inhibiting aldosterone synthesis. In vitro, promotes the production of cGMP and induces vasodilation. May promote natriuresis, at least in part, by enhancing prostaglandin E2 synthesis resulting in the inhibition of renal Na+-K+-ATPase. May have a role in potassium excretion but not sodium excretion (natriuresis). Possibly enhances protein excretion in urine by decreasing proximal tubular protein reabsorption. In terms of biological role, hormone produced in the kidneys that appears to be important for maintaining cardio-renal homeostasis. Mediates vasodilation, natriuresis and diuresis primarily in the renal system, in order to maintain the extracellular fluid volume and control the fluid-electrolyte balance. Specifically binds and stimulates cGMP production by renal transmembrane receptors, likely NPR1. Urodilatin not ANP, may be the natriuretic peptide responsible for the regulation of sodium and water homeostasis in the kidney. May have a role in cardio-renal homeostasis through regulation of natriuresis and vasodilation. In vivo promotes natriuresis and in vitro, vasodilates renal artery strips. Its function is as follows. May have a role in cardio-renal homeostasis through regulation of regulation of natriuresis and vasodilation. In vivo promotes natriuresis. In vitro, vasodilates intestinal smooth muscle but not smooth muscle strips. Functionally, may have a role in cardio-renal homeostasis through regulation of natriuresis and vasodilation. In vivo promotes natriuresis. In vitro, selectively vasodilates intestinal and vascular smooth muscle strips. In terms of biological role, may have a role in cardio-renal homeostasis through regulation of natriuresis and vasodilation. In vivo promotes natriuresis. In vitro, selectively vasodilates intestinal smooth muscle but not vascular smooth muscle strips. The polypeptide is Natriuretic peptides A (NPPA) (Homo sapiens (Human)).